Here is a 950-residue protein sequence, read N- to C-terminus: Glycine dehydrogenase (decarboxylating) (950 aa).

Lysine 698 is subject to N6-(pyridoxal phosphate)lysine.

This sequence belongs to the GcvP family. In terms of assembly, the glycine cleavage system is composed of four proteins: P, T, L and H. Pyridoxal 5'-phosphate serves as cofactor.

The enzyme catalyses N(6)-[(R)-lipoyl]-L-lysyl-[glycine-cleavage complex H protein] + glycine + H(+) = N(6)-[(R)-S(8)-aminomethyldihydrolipoyl]-L-lysyl-[glycine-cleavage complex H protein] + CO2. The glycine cleavage system catalyzes the degradation of glycine. The P protein binds the alpha-amino group of glycine through its pyridoxal phosphate cofactor; CO(2) is released and the remaining methylamine moiety is then transferred to the lipoamide cofactor of the H protein. The polypeptide is Glycine dehydrogenase (decarboxylating) (Neisseria meningitidis serogroup C (strain 053442)).